The following is a 337-amino-acid chain: Cytoskeleton protein RodZ (337 aa).

Residues 1–111 (MNTEATHDQN…LGKRRKKRDG (111 aa)) lie on the Cytoplasmic side of the membrane. The region spanning 19 to 71 (LRNAREQLGLSQQAVAERLCLKVSTVRDIEEDKAPADLASTFLRGYIRSYARL) is the HTH cro/C1-type domain. A DNA-binding region (H-T-H motif) is located at residues 30-49 (QQAVAERLCLKVSTVRDIEE). A helical; Signal-anchor for type II membrane protein membrane pass occupies residues 112-132 (WLMTFTWLVLFVVIGLSGAWW). The Periplasmic portion of the chain corresponds to 133–337 (WQDHKAQQEE…TLNAEQSPAQ (205 aa)). The segment covering 145–167 (TMADQSSAELSSNSEQGQSVPLN) has biased composition (polar residues). A disordered region spans residues 145–237 (TMADQSSAEL…ATTTPDGAAP (93 aa)). A compositionally biased stretch (low complexity) spans 168-207 (TSTTTDPATTSTPPASVDTTATNTQTPAVTAPAPAVDPQQ). Polar residues predominate over residues 208–218 (NAVVSPSQANV). A compositionally biased stretch (low complexity) spans 219–237 (DTAATPAPTATTTPDGAAP).

Belongs to the RodZ family.

The protein resides in the cell inner membrane. In terms of biological role, cytoskeletal protein that is involved in cell-shape control through regulation of the length of the long axis. This Escherichia coli (strain 55989 / EAEC) protein is Cytoskeleton protein RodZ.